The primary structure comprises 347 residues: Protein RecA (347 aa).

An ATP-binding site is contributed by 67-74; it reads GPESSGKT. Positions 326-347 are disordered; that stretch reads DKLLPGRAPSSEAQGTESGQEA. Polar residues predominate over residues 336 to 347; that stretch reads SEAQGTESGQEA.

This sequence belongs to the RecA family.

The protein resides in the cytoplasm. Can catalyze the hydrolysis of ATP in the presence of single-stranded DNA, the ATP-dependent uptake of single-stranded DNA by duplex DNA, and the ATP-dependent hybridization of homologous single-stranded DNAs. It interacts with LexA causing its activation and leading to its autocatalytic cleavage. This Alkalilimnicola ehrlichii (strain ATCC BAA-1101 / DSM 17681 / MLHE-1) protein is Protein RecA.